The following is a 209-amino-acid chain: Uracil phosphoribosyltransferase (209 aa).

5-phospho-alpha-D-ribose 1-diphosphate-binding positions include Arg-79, Arg-104, and 131–139; that span reads DPMLATGGS. Uracil is bound by residues Ile-194 and 199 to 201; that span reads GDA. 5-phospho-alpha-D-ribose 1-diphosphate is bound at residue Asp-200.

It belongs to the UPRTase family. Mg(2+) serves as cofactor.

It carries out the reaction UMP + diphosphate = 5-phospho-alpha-D-ribose 1-diphosphate + uracil. It functions in the pathway pyrimidine metabolism; UMP biosynthesis via salvage pathway; UMP from uracil: step 1/1. Allosterically activated by GTP. Its function is as follows. Catalyzes the conversion of uracil and 5-phospho-alpha-D-ribose 1-diphosphate (PRPP) to UMP and diphosphate. This Alkaliphilus oremlandii (strain OhILAs) (Clostridium oremlandii (strain OhILAs)) protein is Uracil phosphoribosyltransferase.